We begin with the raw amino-acid sequence, 157 residues long: Protein Smg homolog (157 aa).

The protein belongs to the Smg family.

In Xanthomonas campestris pv. campestris (strain 8004), this protein is Protein Smg homolog.